A 519-amino-acid chain; its full sequence is Aldehyde dehydrogenase X, mitochondrial (519 aa).

The transit peptide at 1–19 (MLTARLLLPRLLCLQGRTT) directs the protein to the mitochondrion. K53 carries the N6-acetyllysine modification. K54 carries the post-translational modification N6-acetyllysine; alternate. K54 carries the post-translational modification N6-succinyllysine; alternate. K83 bears the N6-succinyllysine mark. 264–269 (GSTEVG) is an NAD(+) binding site. Catalysis depends on E287, which acts as the Proton acceptor. C321 serves as the catalytic Nucleophile. 5 positions are modified to N6-acetyllysine; alternate: K366, K385, K401, K416, and K428. An N6-succinyllysine; alternate mark is found at K366, K385, K401, K416, and K428. K431 carries the N6-acetyllysine modification.

Belongs to the aldehyde dehydrogenase family. Homotetramer.

It localises to the mitochondrion matrix. The catalysed reaction is an aldehyde + NAD(+) + H2O = a carboxylate + NADH + 2 H(+). It functions in the pathway alcohol metabolism; ethanol degradation; acetate from ethanol: step 2/2. In terms of biological role, ALDHs play a major role in the detoxification of alcohol-derived acetaldehyde. They are involved in the metabolism of corticosteroids, biogenic amines, neurotransmitters, and lipid peroxidation. The polypeptide is Aldehyde dehydrogenase X, mitochondrial (Aldh1b1) (Mus musculus (Mouse)).